The primary structure comprises 231 residues: Triggering receptor expressed on myeloid cells 1 (231 aa).

An N-terminal signal peptide occupies residues M1 to A20. Over A21–N202 the chain is Extracellular. The Ig-like V-type domain occupies E26–T131. C41 and C110 are joined by a disulfide. Polar residues-rich tracts occupy residues S134–K157 and T164–T182. Residues S134 to T182 form a disordered region. N-linked (GlcNAc...) asparagine glycans are attached at residues N188 and N191. Residues I203–A223 form a helical membrane-spanning segment. Residues V224–P231 lie on the Cytoplasmic side of the membrane.

In terms of assembly, monomer. Homomultimer; when activated. Interacts with TYROBP/DAP12. Interacts with TLR4.

It localises to the cell membrane. Functionally, cell surface receptor that plays important roles in innate and adaptive immunity by amplifying inflammatory responses. Upon activation by various ligands such as PGLYRP1, HMGB1 or HSP70, multimerizes and forms a complex with transmembrane adapter TYROBP/DAP12. In turn, initiates a SYK-mediated cascade of tyrosine phosphorylation, activating multiple downstream mediators such as BTK, MAPK1, MAPK3 or phospholipase C-gamma. This cascade promotes the neutrophil- and macrophage-mediated release of pro-inflammatory cytokines and/or chemokines, as well as their migration and thereby amplifies inflammatory responses that are triggered by bacterial and fungal infections. By also promoting the amplification of inflammatory signals that are initially triggered by Toll-like receptor (TLR) and NOD-like receptor engagement, plays a major role in the pathophysiology of acute and chronic inflammatory diseases of different etiologies including septic shock and atherosclerosis. The polypeptide is Triggering receptor expressed on myeloid cells 1 (TREM1) (Pongo abelii (Sumatran orangutan)).